The sequence spans 216 residues: Ras-related protein RABA1c (216 aa).

20–27 (GDSGVGKS) serves as a coordination point for GTP. Residues 42–50 (SKSTIGVEF) carry the Effector region motif. GTP contacts are provided by residues 68–72 (DTAGQ), 126–129 (NKSD), and 156–157 (SA). Residues Cys213 and Cys214 are each lipidated (S-geranylgeranyl cysteine).

It belongs to the small GTPase superfamily. Rab family.

The protein localises to the cell membrane. Its function is as follows. Intracellular vesicle trafficking and protein transport. In Arabidopsis thaliana (Mouse-ear cress), this protein is Ras-related protein RABA1c (RABA1C).